A 123-amino-acid polypeptide reads, in one-letter code: Small ribosomal subunit protein uS13 (123 aa).

Residues 92-123 are disordered; that stretch reads RKGLPVRGQKTKTNARTRKGPKKLVGAKKKSK.

It belongs to the universal ribosomal protein uS13 family. In terms of assembly, part of the 30S ribosomal subunit. Forms a loose heterodimer with protein S19. Forms two bridges to the 50S subunit in the 70S ribosome.

Functionally, located at the top of the head of the 30S subunit, it contacts several helices of the 16S rRNA. In the 70S ribosome it contacts the 23S rRNA (bridge B1a) and protein L5 of the 50S subunit (bridge B1b), connecting the 2 subunits; these bridges are implicated in subunit movement. Contacts the tRNAs in the A and P-sites. The protein is Small ribosomal subunit protein uS13 of Clostridium kluyveri (strain NBRC 12016).